The chain runs to 131 residues: Bypass of stop codon protein 4 (131 aa).

The sequence is that of Bypass of stop codon protein 4 (BSC4) from Saccharomyces cerevisiae (strain ATCC 204508 / S288c) (Baker's yeast).